The following is a 404-amino-acid chain: NADH-quinone oxidoreductase subunit D (404 aa).

Belongs to the complex I 49 kDa subunit family. As to quaternary structure, NDH-1 is composed of 14 different subunits. Subunits NuoB, C, D, E, F, and G constitute the peripheral sector of the complex.

It is found in the cell inner membrane. It catalyses the reaction a quinone + NADH + 5 H(+)(in) = a quinol + NAD(+) + 4 H(+)(out). NDH-1 shuttles electrons from NADH, via FMN and iron-sulfur (Fe-S) centers, to quinones in the respiratory chain. The immediate electron acceptor for the enzyme in this species is believed to be ubiquinone. Couples the redox reaction to proton translocation (for every two electrons transferred, four hydrogen ions are translocated across the cytoplasmic membrane), and thus conserves the redox energy in a proton gradient. The sequence is that of NADH-quinone oxidoreductase subunit D from Dinoroseobacter shibae (strain DSM 16493 / NCIMB 14021 / DFL 12).